The sequence spans 401 residues: Enolase (401 aa).

Glutamine 154 serves as a coordination point for (2R)-2-phosphoglycerate. Residue glutamate 196 is the Proton donor of the active site. 3 residues coordinate Mg(2+): aspartate 232, glutamate 275, and aspartate 302. Lysine 327, arginine 356, serine 357, and lysine 378 together coordinate (2R)-2-phosphoglycerate. Catalysis depends on lysine 327, which acts as the Proton acceptor.

This sequence belongs to the enolase family. It depends on Mg(2+) as a cofactor.

Its subcellular location is the cytoplasm. The protein resides in the secreted. It is found in the cell surface. It catalyses the reaction (2R)-2-phosphoglycerate = phosphoenolpyruvate + H2O. It functions in the pathway carbohydrate degradation; glycolysis; pyruvate from D-glyceraldehyde 3-phosphate: step 4/5. Catalyzes the reversible conversion of 2-phosphoglycerate (2-PG) into phosphoenolpyruvate (PEP). It is essential for the degradation of carbohydrates via glycolysis. This is Enolase from Haloquadratum walsbyi (strain DSM 16790 / HBSQ001).